The sequence spans 381 residues: L-lactate dehydrogenase (381 aa).

The FMN hydroxy acid dehydrogenase domain maps to 1–380 (MIISASTDYR…SRDSLVRELG (380 aa)). Tyr24 is a substrate binding site. The FMN site is built by Ser106 and Gln127. Tyr129 contacts substrate. Thr155 contributes to the FMN binding site. Arg164 lines the substrate pocket. Lys251 is a binding site for FMN. His275 functions as the Proton acceptor in the catalytic mechanism. Substrate is bound at residue Arg278. 306 to 330 (DSGIRSGLDVVRMIALGADTVLIGR) provides a ligand contact to FMN.

This sequence belongs to the FMN-dependent alpha-hydroxy acid dehydrogenase family. In terms of assembly, homotetramer. It depends on FMN as a cofactor.

The protein localises to the cell inner membrane. It catalyses the reaction (S)-lactate + A = pyruvate + AH2. Catalyzes the conversion of L-lactate to pyruvate. Is coupled to the respiratory chain. The protein is L-lactate dehydrogenase of Pseudomonas putida (strain W619).